The following is a 128-amino-acid chain: Large ribosomal subunit protein uL22 (128 aa).

The protein belongs to the universal ribosomal protein uL22 family. In terms of assembly, part of the 50S ribosomal subunit.

Functionally, this protein binds specifically to 23S rRNA; its binding is stimulated by other ribosomal proteins, e.g. L4, L17, and L20. It is important during the early stages of 50S assembly. It makes multiple contacts with different domains of the 23S rRNA in the assembled 50S subunit and ribosome. In terms of biological role, the globular domain of the protein is located near the polypeptide exit tunnel on the outside of the subunit, while an extended beta-hairpin is found that lines the wall of the exit tunnel in the center of the 70S ribosome. This chain is Large ribosomal subunit protein uL22, found in Methylocella silvestris (strain DSM 15510 / CIP 108128 / LMG 27833 / NCIMB 13906 / BL2).